The sequence spans 298 residues: Tyrosine recombinase XerC (298 aa).

The region spanning 1-84 (MNHIQEAFLN…TLRTFYEYWM (84 aa)) is the Core-binding (CB) domain. The 182-residue stretch at 105–286 (YLPQFFYEEE…SNQQLRKVYL (182 aa)) folds into the Tyr recombinase domain. Catalysis depends on residues Arg-145, Lys-169, His-238, Arg-241, and His-264. Tyr-273 serves as the catalytic O-(3'-phospho-DNA)-tyrosine intermediate.

It belongs to the 'phage' integrase family. XerC subfamily. Forms a cyclic heterotetrameric complex composed of two molecules of XerC and two molecules of XerD.

It is found in the cytoplasm. Functionally, site-specific tyrosine recombinase, which acts by catalyzing the cutting and rejoining of the recombining DNA molecules. The XerC-XerD complex is essential to convert dimers of the bacterial chromosome into monomers to permit their segregation at cell division. It also contributes to the segregational stability of plasmids. In Staphylococcus aureus (strain MSSA476), this protein is Tyrosine recombinase XerC.